Reading from the N-terminus, the 513-residue chain is Putative ribose/galactose/methyl galactoside import ATP-binding protein 2 (513 aa).

ABC transporter domains lie at 24–260 (LTAE…VGRE) and 270–510 (VPIG…VMEL). 56-63 (GENGAGKS) lines the ATP pocket.

The protein belongs to the ABC transporter superfamily. Carbohydrate importer 2 (CUT2) (TC 3.A.1.2) family.

It localises to the cell inner membrane. The catalysed reaction is D-ribose(out) + ATP + H2O = D-ribose(in) + ADP + phosphate + H(+). The enzyme catalyses D-galactose(out) + ATP + H2O = D-galactose(in) + ADP + phosphate + H(+). Functionally, part of an ABC transporter complex involved in carbohydrate import. Could be involved in ribose, galactose and/or methyl galactoside import. Responsible for energy coupling to the transport system. This Rhizobium meliloti (strain 1021) (Ensifer meliloti) protein is Putative ribose/galactose/methyl galactoside import ATP-binding protein 2.